The chain runs to 237 residues: Nodulation protein NolA (237 aa).

Residues 10 to 79 (RWRIGELAEA…LVEIRKAMEG (70 aa)) form the HTH merR-type domain. The H-T-H motif DNA-binding region spans 13–32 (IGELAEATGVTVRTLHHYEH).

Functionally, involved in genotype-specific nodulation of soybeans. This is Nodulation protein NolA (nolA) from Bradyrhizobium diazoefficiens (strain JCM 10833 / BCRC 13528 / IAM 13628 / NBRC 14792 / USDA 110).